A 105-amino-acid polypeptide reads, in one-letter code: UPF0145 protein lpp0255 (105 aa).

Belongs to the UPF0145 family.

This Legionella pneumophila (strain Paris) protein is UPF0145 protein lpp0255.